The primary structure comprises 82 residues: Ferredoxin (82 aa).

Residues 3-31 (KYTIVDKDTCIACGACGAAAPDIYDYDDE) enclose the 4Fe-4S ferredoxin-type domain. [4Fe-4S] cluster-binding residues include cysteine 12, cysteine 15, cysteine 18, and cysteine 62.

Requires [4Fe-4S] cluster as cofactor.

Its function is as follows. Ferredoxins are iron-sulfur proteins that transfer electrons in a wide variety of metabolic reactions. This ferredoxin may act as a phosphodonor to cytochrome P450 BioI. The chain is Ferredoxin (fer) from Bacillus subtilis (strain 168).